The sequence spans 171 residues: Homeobox protein engrailed-1-B (171 aa).

Disordered regions lie at residues glutamate 1–proline 41 and tyrosine 60–arginine 86. Residues proline 15 to serine 29 show a composition bias toward low complexity. Positions aspartate 82–serine 141 form a DNA-binding region, homeobox.

This sequence belongs to the engrailed homeobox family.

It localises to the nucleus. In terms of biological role, required for proper formation of the apical ectodermal ridge and correct dorsal-ventral patterning in the limb. This chain is Homeobox protein engrailed-1-B (en1-b), found in Xenopus laevis (African clawed frog).